We begin with the raw amino-acid sequence, 515 residues long: Bifunctional purine biosynthesis protein PurH (515 aa).

Positions 1 to 145 constitute an MGS-like domain; the sequence is MTKRALISVS…KNHASVTVVV (145 aa).

It belongs to the PurH family.

The enzyme catalyses (6R)-10-formyltetrahydrofolate + 5-amino-1-(5-phospho-beta-D-ribosyl)imidazole-4-carboxamide = 5-formamido-1-(5-phospho-D-ribosyl)imidazole-4-carboxamide + (6S)-5,6,7,8-tetrahydrofolate. It carries out the reaction IMP + H2O = 5-formamido-1-(5-phospho-D-ribosyl)imidazole-4-carboxamide. It functions in the pathway purine metabolism; IMP biosynthesis via de novo pathway; 5-formamido-1-(5-phospho-D-ribosyl)imidazole-4-carboxamide from 5-amino-1-(5-phospho-D-ribosyl)imidazole-4-carboxamide (10-formyl THF route): step 1/1. Its pathway is purine metabolism; IMP biosynthesis via de novo pathway; IMP from 5-formamido-1-(5-phospho-D-ribosyl)imidazole-4-carboxamide: step 1/1. The sequence is that of Bifunctional purine biosynthesis protein PurH from Streptococcus agalactiae serotype III (strain NEM316).